A 205-amino-acid polypeptide reads, in one-letter code: Sarcosine oxidase subunit gamma (205 aa).

The protein belongs to the SoxG family. Heterotetramer composed of subunits alpha (SoxA), beta (SoxB), gamma (SoxG) and delta (SoxD).

The protein localises to the cytoplasm. It catalyses the reaction sarcosine + (6S)-5,6,7,8-tetrahydrofolate + O2 = (6R)-5,10-methylene-5,6,7,8-tetrahydrofolate + glycine + H2O2. The catalysed reaction is sarcosine + O2 + H2O = formaldehyde + glycine + H2O2. Its activity is regulated as follows. Inhibited by Zn(2+), Cu(2+), Cd(2+), Hg(2+), Ag(+), p-chloromercuribenzoate (p-CMB), iodoacetamide, N-ethylmaleimide, CN(-), o-phenanthroline and sodium lauryl sulfate. In terms of biological role, in the presence of tetrahydrofolate, catalyzes the oxidative demethylation of sarcosine to yield glycine, 5,10-methylenetetrahydrofolate and hydrogen peroxide. In the absence of tetrahydrofolate, catalyzes the oxidative demethylation of sarcosine to yield glycine, formaldehyde and hydrogen peroxide. Can also use N-methyl-L-alanine and N-ethyl-L-glycine. Is very specific for oxygen as an acceptor. In Corynebacterium sp. (strain U-96), this protein is Sarcosine oxidase subunit gamma.